A 428-amino-acid polypeptide reads, in one-letter code: Histidine--tRNA ligase (428 aa).

The protein belongs to the class-II aminoacyl-tRNA synthetase family. Homodimer.

The protein localises to the cytoplasm. It carries out the reaction tRNA(His) + L-histidine + ATP = L-histidyl-tRNA(His) + AMP + diphosphate + H(+). The sequence is that of Histidine--tRNA ligase from Pseudomonas entomophila (strain L48).